The sequence spans 298 residues: Probable D,D-dipeptide transport system permease protein DdpC (298 aa).

Over 1-33 (MMLSEETSAVRPQKQTRFNGAKLVWMLKGSPLT) the chain is Cytoplasmic. Residues 34 to 54 (VTSAVIIVLMLLMMIFSPWLA) form a helical membrane-spanning segment. Over 55–96 (THDPNAIDLTARLLPPSAAHWFGTDEVGRDLFSRVLVGSQQS) the chain is Periplasmic. Residues 97-117 (ILAGLVVVAIAGMIGSLLGCL) traverse the membrane as a helical segment. One can recognise an ABC transmembrane type-1 domain in the interval 97-282 (ILAGLVVVAI…LTAVGFNLFG (186 aa)). The Cytoplasmic segment spans residues 118–124 (SGVLGGR). A run of 2 helical transmembrane segments spans residues 125–145 (ADAI…LVLT) and 146–166 (MALA…IAIV). Over 167-217 (RIPFYVRLARGQALVVRQYTYVQAAKTFGASRWHLINWHILRNSLPPLIVQ) the chain is Cytoplasmic. The helical transmembrane segment at 218 to 238 (ASLDIGSAILMAATLGFIGLG) threads the bilayer. Residues 239–260 (AQQPSAEWGAMVANGRNYVLDQ) lie on the Periplasmic side of the membrane. The chain crosses the membrane as a helical span at residues 261–281 (WWYCAFPGAAILLTAVGFNLF). Residues 282–298 (GDGIRDLLDPKAGGKQS) lie on the Cytoplasmic side of the membrane.

This sequence belongs to the binding-protein-dependent transport system permease family. OppBC subfamily. As to quaternary structure, the complex is composed of two ATP-binding proteins (DdpD and DdpF), two transmembrane proteins (DdpB and DdpC) and a solute-binding protein (DdpA).

Its subcellular location is the cell inner membrane. Functionally, part of the ABC transporter complex DdpABCDF, which is probably involved in D,D-dipeptide transport. Probably responsible for the translocation of the substrate across the membrane. This Escherichia coli (strain K12) protein is Probable D,D-dipeptide transport system permease protein DdpC (ddpC).